The primary structure comprises 860 residues: MSSRFFHGGSDSESSSSDEEELYSDRDEEEVSDEEEETTSEEESSEEESDDEAGLTGAKQYLRGAADLDESDEEEDRVTIVKSAKDKRLEELEGTMKLIENAEKINDWAVISTEFDKLNRQVAKIIQAGPTPKIYIKAIADLEDFVNETVVKQKTTTKKMNASNAKGFNTVKQRIKKNNKDYTAEIEKYRENKDEYLEEEEEQETVIVEKKARTIRIEDTLAQSDEGFSTVGRGGRTLQYTPESILKHLRVIVESRGKKNTDRIEQIKVMEKLLEVASSPYHTIRILLTLISTRFDLATSSLSNYMSTEQWKLAENEISTLISTLEEHPQFVVTEGAEEWEDDEKLPQVAPGEVLKVPGSVVSFVERLDDELIRSLQHIDPHTAEYIERLGDEQLLYNNIVRVLLYVEGLNQVEKSEPRQDSVNRVLMRRLEHLYFKPSQVVTILEDNTWKDLPEKLSSSITPRDMKSDVSLLVQTICNYLFQYSDGIIRARAMLCQIYFLALHDKYHRARDLMLMSHLTENISNFDVSTQILFNRTLVQIGLCAFRAGLIYEAQNTLSEVCGSGRQKELLAQGIILQRYSSVSPEQEKLERQRQLPFHMHINLELLECIYLTSSMFLEVPLMAQTSSSPEMKRRIISKTFRRMLDYNERQVFTGPPENTRDGVIMSAKFLAAGDWKKASETLNSIKIWDLMAQPDKIKAMLAQQIQEEGLRTYLFTYAPFYDTLSITTLSNMFDLTEKKISAIISRMISHEELAAALDQVNNAIVFRKGVELSRLQSQIVTLADKSMSLLEANEKTLEQRTQGMANAFQRDQGPGGRLGRGQGRGGQRTAGGRPPIGGQQRRPGGQQFSGGALGGAIKA.

Residues 1–79 are disordered; it reads MSSRFFHGGS…ESDEEEDRVT (79 aa). Acidic residues-rich tracts occupy residues 16–53 and 67–76; these read SSDE…DDEA and DLDESDEEED. A PCI domain is found at 598-772; that stretch reads FHMHINLELL…NAIVFRKGVE (175 aa). Positions 808 to 860 are disordered; the sequence is AFQRDQGPGGRLGRGQGRGGQRTAGGRPPIGGQQRRPGGQQFSGGALGGAIKA. Positions 814 to 830 are enriched in gly residues; sequence GPGGRLGRGQGRGGQRT. The span at 831–847 shows a compositional bias: low complexity; the sequence is AGGRPPIGGQQRRPGGQ. Gly residues predominate over residues 848-860; the sequence is QFSGGALGGAIKA.

It belongs to the eIF-3 subunit C family. In terms of assembly, component of the eukaryotic translation initiation factor 3 (eIF-3) complex.

The protein localises to the cytoplasm. Its function is as follows. Component of the eukaryotic translation initiation factor 3 (eIF-3) complex, which is involved in protein synthesis of a specialized repertoire of mRNAs and, together with other initiation factors, stimulates binding of mRNA and methionyl-tRNAi to the 40S ribosome. The eIF-3 complex specifically targets and initiates translation of a subset of mRNAs involved in cell proliferation. This is Eukaryotic translation initiation factor 3 subunit C from Coccidioides immitis (strain RS) (Valley fever fungus).